The sequence spans 157 residues: Ribosome maturation factor RimP (157 aa).

This sequence belongs to the RimP family.

It localises to the cytoplasm. Required for maturation of 30S ribosomal subunits. The chain is Ribosome maturation factor RimP from Helicobacter hepaticus (strain ATCC 51449 / 3B1).